The primary structure comprises 202 residues: Superoxide dismutase [Mn/Fe] (202 aa).

Positions 26, 80, 163, and 167 each coordinate Fe(3+). Mn(2+)-binding residues include His26, His80, Asp163, and His167.

It belongs to the iron/manganese superoxide dismutase family. Homodimer. Mn(2+) serves as cofactor. Requires Fe(3+) as cofactor.

The enzyme catalyses 2 superoxide + 2 H(+) = H2O2 + O2. Destroys superoxide anion radicals which are normally produced within the cells and which are toxic to biological systems. Catalyzes the dismutation of superoxide anion radicals into O2 and H2O2 by successive reduction and oxidation of the transition metal ion at the active site. This chain is Superoxide dismutase [Mn/Fe] (sodB), found in Methylomonas sp. (strain J).